The primary structure comprises 351 residues: uncharacterized protein (351 aa).

The tract at residues 1–61 is disordered; that stretch reads MNDKRKPSFQ…RDKQEVKETR (61 aa). Composition is skewed to basic and acidic residues over residues 16 to 38 and 44 to 61; these read FQER…HFND and RNEK…KETR.

Belongs to the class IV-like SAM-binding methyltransferase superfamily. RNA methyltransferase TrmH family.

This is an uncharacterized protein from Haemophilus influenzae (strain ATCC 51907 / DSM 11121 / KW20 / Rd).